The following is a 115-amino-acid chain: Double-headed protease inhibitor, submandibular gland (115 aa).

Kazal-like domains are found at residues 6 to 66 (IGRE…ACDI) and 67 to 115 (ECTE…HGEC). 6 disulfide bridges follow: cysteine 12–cysteine 46, cysteine 24–cysteine 43, cysteine 32–cysteine 64, cysteine 68–cysteine 97, cysteine 75–cysteine 94, and cysteine 83–cysteine 115.

It localises to the secreted. This inhibitor is composed of two homologous actively inhibiting halves: one which inhibits trypsin, the other which inhibits elastase. This Canis lupus familiaris (Dog) protein is Double-headed protease inhibitor, submandibular gland.